Reading from the N-terminus, the 705-residue chain is Phosphoribosylformylglycinamidine synthase subunit PurL (705 aa).

His-32 is an active-site residue. Tyr-35 lines the ATP pocket. Glu-76 contacts Mg(2+). Substrate-binding positions include 77–80 (SHNH) and Arg-99. His-78 functions as the Proton acceptor in the catalytic mechanism. Position 100 (Asp-100) interacts with Mg(2+). Gln-224 serves as a coordination point for substrate. Asp-252 lines the Mg(2+) pocket. 296-298 (ESQ) is a binding site for substrate. 2 residues coordinate ATP: Asp-471 and Gly-508. Asn-509 provides a ligand contact to Mg(2+). Ser-511 is a substrate binding site.

Belongs to the FGAMS family. In terms of assembly, monomer. Part of the FGAM synthase complex composed of 1 PurL, 1 PurQ and 2 PurS subunits.

The protein localises to the cytoplasm. It catalyses the reaction N(2)-formyl-N(1)-(5-phospho-beta-D-ribosyl)glycinamide + L-glutamine + ATP + H2O = 2-formamido-N(1)-(5-O-phospho-beta-D-ribosyl)acetamidine + L-glutamate + ADP + phosphate + H(+). The protein operates within purine metabolism; IMP biosynthesis via de novo pathway; 5-amino-1-(5-phospho-D-ribosyl)imidazole from N(2)-formyl-N(1)-(5-phospho-D-ribosyl)glycinamide: step 1/2. Functionally, part of the phosphoribosylformylglycinamidine synthase complex involved in the purines biosynthetic pathway. Catalyzes the ATP-dependent conversion of formylglycinamide ribonucleotide (FGAR) and glutamine to yield formylglycinamidine ribonucleotide (FGAM) and glutamate. The FGAM synthase complex is composed of three subunits. PurQ produces an ammonia molecule by converting glutamine to glutamate. PurL transfers the ammonia molecule to FGAR to form FGAM in an ATP-dependent manner. PurS interacts with PurQ and PurL and is thought to assist in the transfer of the ammonia molecule from PurQ to PurL. The protein is Phosphoribosylformylglycinamidine synthase subunit PurL of Pyrococcus abyssi (strain GE5 / Orsay).